We begin with the raw amino-acid sequence, 517 residues long: Glutamate--tRNA ligase (517 aa).

A 'HIGH' region motif is present at residues 10 to 20 (PSPSGFLHVGG). Zn(2+)-binding residues include Cys-107, Cys-109, Cys-134, and Asp-136. A 'KMSKS' region motif is present at residues 250-254 (KLSKR). An ATP-binding site is contributed by Lys-253.

Belongs to the class-I aminoacyl-tRNA synthetase family. Glutamate--tRNA ligase type 1 subfamily. In terms of assembly, monomer. Zn(2+) is required as a cofactor.

The protein resides in the cytoplasm. The catalysed reaction is tRNA(Glu) + L-glutamate + ATP = L-glutamyl-tRNA(Glu) + AMP + diphosphate. In terms of biological role, catalyzes the attachment of glutamate to tRNA(Glu) in a two-step reaction: glutamate is first activated by ATP to form Glu-AMP and then transferred to the acceptor end of tRNA(Glu). This is Glutamate--tRNA ligase from Leptospira biflexa serovar Patoc (strain Patoc 1 / ATCC 23582 / Paris).